A 302-amino-acid polypeptide reads, in one-letter code: ATP synthase mitochondrial F1 complex assembly factor 1 (302 aa).

This sequence belongs to the ATP11 family. Interacts with ATP5F1B; involved in the assembly of the F1 component of the mitochondrial ATP synthase (ATPase).

It is found in the mitochondrion inner membrane. Its function is as follows. Has a complex stabilizing activity in the assembly of the mitochondrial F1-F0 complex. This chain is ATP synthase mitochondrial F1 complex assembly factor 1 (atpaf1), found in Danio rerio (Zebrafish).